Reading from the N-terminus, the 655-residue chain is p-hydroxybenzoic acid efflux pump subunit AaeB (655 aa).

11 consecutive transmembrane segments (helical) span residues 13 to 33 (FAVK…HFQL), 38 to 58 (WAVL…GGEP), 69 to 89 (LRII…ITMI), 93 to 113 (LLMI…SSLV), 121 to 141 (WGLS…EPLL), 152 to 172 (EIVI…PRSV), 370 to 390 (LFWL…IAVV), 407 to 427 (FIYG…VIIP), 431 to 451 (QSML…GIEV), 459 to 479 (MGAL…TFHF), and 482 to 502 (FLDS…VILL).

Belongs to the aromatic acid exporter ArAE (TC 2.A.85) family.

It localises to the cell inner membrane. In terms of biological role, forms an efflux pump with AaeA. Could function as a metabolic relief valve, allowing to eliminate certain compounds when they accumulate to high levels in the cell. The chain is p-hydroxybenzoic acid efflux pump subunit AaeB from Citrobacter koseri (strain ATCC BAA-895 / CDC 4225-83 / SGSC4696).